Consider the following 173-residue polypeptide: Adenine phosphoribosyltransferase (173 aa).

Belongs to the purine/pyrimidine phosphoribosyltransferase family. In terms of assembly, homodimer.

The protein resides in the cytoplasm. The enzyme catalyses AMP + diphosphate = 5-phospho-alpha-D-ribose 1-diphosphate + adenine. It functions in the pathway purine metabolism; AMP biosynthesis via salvage pathway; AMP from adenine: step 1/1. In terms of biological role, catalyzes a salvage reaction resulting in the formation of AMP, that is energically less costly than de novo synthesis. This chain is Adenine phosphoribosyltransferase, found in Caldanaerobacter subterraneus subsp. tengcongensis (strain DSM 15242 / JCM 11007 / NBRC 100824 / MB4) (Thermoanaerobacter tengcongensis).